The following is a 279-amino-acid chain: MQPIIELNNIQFNYQPEDASPALKDVSFSIQQGEWVAIIGHNGSGKSTLAKTINGLLLPAAGTIKVGGKELNEANVWDIRRMVGMVFQNPDNQFVGSTVEDDVAFGLENQGIPRDEMVERVHDALERVRMLDFAKREPARLSGGQKQRVAIAGVVALRPDIIILDEATSMLDPEGRAEVIATIQKIKEESNLTVISITHDIDEAANANRILVMRQGQLTNEGTPEKIFSAGEALVEMGLDLPFPEKLKVALKERGVVVPTNYLTEEGMVDWLWTSVLNK.

The region spanning 5-240 (IELNNIQFNY…GEALVEMGLD (236 aa)) is the ABC transporter domain. An ATP-binding site is contributed by 40 to 47 (GHNGSGKS).

The protein belongs to the ABC transporter superfamily. Energy-coupling factor EcfA family. Forms a stable energy-coupling factor (ECF) transporter complex composed of 2 membrane-embedded substrate-binding proteins (S component), 2 ATP-binding proteins (A component) and 2 transmembrane proteins (T component).

The protein resides in the cell membrane. In terms of biological role, ATP-binding (A) component of a common energy-coupling factor (ECF) ABC-transporter complex. Unlike classic ABC transporters this ECF transporter provides the energy necessary to transport a number of different substrates. This Enterococcus faecalis (strain ATCC 700802 / V583) protein is Energy-coupling factor transporter ATP-binding protein EcfA1.